The chain runs to 1582 residues: Dynein axonemal assembly factor 1 homolog (1582 aa).

6 LRR repeats span residues 38–60 (RLND…DEYT), 61–82 (ELKS…TKLT), 83–104 (KLKC…EFNR), 105–126 (ELDT…GTDI), 129–150 (VLNT…AALV), and 154–175 (TLSV…KIFE). In terms of domain architecture, LRRCT spans 189-227 (PVVSRLPQYRKTLILACKELTYLDSRPVFPRDRACAEAW). 11 disordered regions span residues 245–420 (AERR…SEMD), 560–587 (SSDV…VKSQ), 859–878 (FSKD…EDRR), 913–942 (DTGE…DDDA), 1073–1092 (SSNE…LVER), 1101–1137 (MQRM…MGEG), 1150–1218 (TEII…QAEG), 1305–1345 (KDNE…TAKD), 1358–1438 (LDPE…PYQT), 1484–1517 (EDSK…NPKN), and 1529–1548 (PSES…STEQ). Low complexity predominate over residues 313 to 327 (ESQASEHSTTSSTSA). The span at 339 to 392 (HIAERISNRRVKPLEGRPKVLYDEAASGDEKAVTTTDSKKDSNAEDLPELKDIT) shows a compositional bias: basic and acidic residues. The segment covering 409–420 (TLLQSDSGSEMD) has biased composition (polar residues). Over residues 572-582 (ESDEEPTEEEM) the composition is skewed to acidic residues. Residues 928 to 942 (SDSESEKEVEEDDDA) show a composition bias toward acidic residues. Composition is skewed to basic and acidic residues over residues 1078-1092 (LEAK…LVER) and 1103-1125 (RMKE…KEEE). A compositionally biased stretch (low complexity) spans 1166-1178 (EGGAQQEEGGAQS). Basic and acidic residues-rich tracts occupy residues 1321–1335 (PKEE…ETET), 1398–1427 (SALK…KDTE), and 1484–1514 (EDSK…RPEN). The segment covering 1529–1540 (PSESLEDTEATE) has biased composition (acidic residues).

The protein belongs to the DNAAF1 family.

The protein localises to the cell projection. Its subcellular location is the cilium. Its function is as follows. Cilium-specific protein required for cilia structures. This is Dynein axonemal assembly factor 1 homolog (dtr) from Drosophila pseudoobscura pseudoobscura (Fruit fly).